The sequence spans 705 residues: Phosphatidylinositol 4-phosphate 5-kinase 3 (705 aa).

MORN repeat units lie at residues 58-80 (YNGGLSAGVPHGTGKYLWSDGCM), 81-103 (YEGEWTRGKASGKGRFSWPSGAT), 104-126 (YEGQFKDGRMDGEGTFIGIDGDT), 127-149 (YRGHWLWGRKHGYGEKRYANGDG), 150-172 (YQGNWKANLQDGNGRYVWSDGNE), 173-195 (YVGEWKNGVISGKGKMTWANGNR), and 196-218 (YDGLWENGAPVGKGVLSWGEEKT). The PIPK domain maps to 321–701 (TVTAGHKNYD…RFRDFINKIF (381 aa)). The segment at 661 to 682 (YDITKKLEHAYKSLHADPASIS) is activation loop.

The protein localises to the cell membrane. It carries out the reaction a 1,2-diacyl-sn-glycero-3-phospho-(1D-myo-inositol 4-phosphate) + ATP = a 1,2-diacyl-sn-glycero-3-phospho-(1D-myo-inositol-4,5-bisphosphate) + ADP + H(+). Functionally, with DRP1A and DRP2B, required for the precise coordination of polar ARAC3/ROP6 and ARAC4/ROP2 placement and subsequent root hair positioning during planar polarity formation in root hair-forming cells, probably by mediating the correct basal-to-planar polarity switching of D6PK into the polar, lipid-enriched domain. In Arabidopsis thaliana (Mouse-ear cress), this protein is Phosphatidylinositol 4-phosphate 5-kinase 3.